The primary structure comprises 362 residues: Epoxyqueuosine reductase (362 aa).

D143 serves as the catalytic Proton donor. The 4Fe-4S ferredoxin-type domain occupies 191 to 220; it reads PDSPKHQDSCGKCQACIKLCPTGAIQPGKM. Positions 200, 203, 206, 210, 226, 253, 256, and 260 each coordinate [4Fe-4S] cluster.

It belongs to the QueG family. In terms of assembly, monomer. Cob(II)alamin is required as a cofactor. [4Fe-4S] cluster serves as cofactor.

The protein localises to the cytoplasm. The enzyme catalyses epoxyqueuosine(34) in tRNA + AH2 = queuosine(34) in tRNA + A + H2O. It functions in the pathway tRNA modification; tRNA-queuosine biosynthesis. Functionally, catalyzes the conversion of epoxyqueuosine (oQ) to queuosine (Q), which is a hypermodified base found in the wobble positions of tRNA(Asp), tRNA(Asn), tRNA(His) and tRNA(Tyr). The chain is Epoxyqueuosine reductase from Francisella cf. novicida (strain Fx1).